The sequence spans 469 residues: Protein RdxA (469 aa).

The Cytoplasmic portion of the chain corresponds to 1–23; it reads MSEPLYAPRTPIFPRQISGAFRT. The helical transmembrane segment at 24 to 44 threads the bilayer; that stretch reads AKWWILAVSLGIYLLTPWLRW. Over 45–75 the chain is Periplasmic; the sequence is DRGPNLPDQAVLIDIAGRRFFLFGIQIWPHE. The helical transmembrane segment at 76-96 threads the bilayer; it reads FYFVAGLLIMAGLGLFLFTSA. At 97 to 149 the chain is on the cytoplasmic side; the sequence is AGRVWCGYACPQTVWTDLFLLVERRIEGDRNAQIRLHRQAWTAEKVWKRLLKW. A helical transmembrane segment spans residues 150–170; it reads SVWAAISLLTGGAWVFYFADA. The Periplasmic portion of the chain corresponds to 171–183; sequence PTLLNGLVTLTAH. Residues 184–204 form a helical membrane-spanning segment; the sequence is PVAWITIFVLTATTFVFAGFM. The Cytoplasmic portion of the chain corresponds to 205-327; that stretch reads REQICIYACP…PAWRRLFRLR (123 aa). 4Fe-4S ferredoxin-type domains follow at residues 242–270 and 266–295; these read KRSE…IREG and DIRE…IGRP. Cysteine 251, cysteine 254, cysteine 257, cysteine 261, cysteine 275, cysteine 278, cysteine 281, and cysteine 285 together coordinate [4Fe-4S] cluster. Residues 328–348 form a helical membrane-spanning segment; that stretch reads TSLYAVLWAGVGVTLIAALLL. Topologically, residues 349-469 are periplasmic; the sequence is RPAVDLAVTP…VKAAFHGARS (121 aa).

The protein resides in the cell membrane. Its function is as follows. Predicted to be involved in a redox process. This Cereibacter sphaeroides (strain ATCC 17023 / DSM 158 / JCM 6121 / CCUG 31486 / LMG 2827 / NBRC 12203 / NCIMB 8253 / ATH 2.4.1.) (Rhodobacter sphaeroides) protein is Protein RdxA (rdxA).